Here is a 352-residue protein sequence, read N- to C-terminus: Heat-inducible transcription repressor HrcA (352 aa).

This sequence belongs to the HrcA family.

Negative regulator of class I heat shock genes (grpE-dnaK-dnaJ and groELS operons). Prevents heat-shock induction of these operons. This Latilactobacillus sakei subsp. sakei (strain 23K) (Lactobacillus sakei subsp. sakei) protein is Heat-inducible transcription repressor HrcA.